Consider the following 372-residue polypeptide: 4-hydroxy-3-methylbut-2-en-1-yl diphosphate synthase (flavodoxin) (372 aa).

Positions 270, 273, 305, and 312 each coordinate [4Fe-4S] cluster.

This sequence belongs to the IspG family. The cofactor is [4Fe-4S] cluster.

It catalyses the reaction (2E)-4-hydroxy-3-methylbut-2-enyl diphosphate + oxidized [flavodoxin] + H2O + 2 H(+) = 2-C-methyl-D-erythritol 2,4-cyclic diphosphate + reduced [flavodoxin]. It participates in isoprenoid biosynthesis; isopentenyl diphosphate biosynthesis via DXP pathway; isopentenyl diphosphate from 1-deoxy-D-xylulose 5-phosphate: step 5/6. Converts 2C-methyl-D-erythritol 2,4-cyclodiphosphate (ME-2,4cPP) into 1-hydroxy-2-methyl-2-(E)-butenyl 4-diphosphate. The sequence is that of 4-hydroxy-3-methylbut-2-en-1-yl diphosphate synthase (flavodoxin) from Idiomarina loihiensis (strain ATCC BAA-735 / DSM 15497 / L2-TR).